The following is a 167-amino-acid chain: Insertion element IS1 4 protein InsB (167 aa).

The protein belongs to the transposase 27 family.

Functionally, absolutely required for transposition of IS1. The chain is Insertion element IS1 4 protein InsB (insB4) from Escherichia coli (strain K12).